A 276-amino-acid polypeptide reads, in one-letter code: Proteasome subunit beta type-8 (276 aa).

Positions 1–72 (MALLDLCGAP…RKVQIEMAHG (72 aa)) are cleaved as a propeptide — removed in mature form. Residue T73 is the Nucleophile of the active site.

The protein belongs to the peptidase T1B family. The 26S proteasome consists of a 20S proteasome core and two 19S regulatory subunits. The 20S proteasome core is composed of 28 subunits that are arranged in four stacked rings, resulting in a barrel-shaped structure. The two end rings are each formed by seven alpha subunits, and the two central rings are each formed by seven beta subunits. The catalytic chamber with the active sites is on the inside of the barrel. Component of the immunoproteasome, where it displaces the equivalent housekeeping subunit PSMB5. Component of the spermatoproteasome, a form of the proteasome specifically found in testis. Directly interacts with POMP. Interacts with TAP1. Autocleaved. The resulting N-terminal Thr residue of the mature subunit is responsible for the nucleophile proteolytic activity.

The protein resides in the cytoplasm. The protein localises to the nucleus. It catalyses the reaction Cleavage of peptide bonds with very broad specificity.. In terms of biological role, the proteasome is a multicatalytic proteinase complex which is characterized by its ability to cleave peptides with Arg, Phe, Tyr, Leu, and Glu adjacent to the leaving group at neutral or slightly basic pH. The proteasome has an ATP-dependent proteolytic activity. This subunit is involved in antigen processing to generate class I binding peptides. May participate in the generation of spliced peptides resulting from the ligation of two separate proteasomal cleavage products that are not contiguous in the parental protein. Required for adipocyte differentiation. This is Proteasome subunit beta type-8 (Psmb8) from Rattus norvegicus (Rat).